Reading from the N-terminus, the 327-residue chain is Phenylalanine--tRNA ligase alpha subunit (327 aa).

Mg(2+) is bound at residue glutamate 252.

The protein belongs to the class-II aminoacyl-tRNA synthetase family. Phe-tRNA synthetase alpha subunit type 1 subfamily. In terms of assembly, tetramer of two alpha and two beta subunits. Mg(2+) is required as a cofactor.

The protein resides in the cytoplasm. The catalysed reaction is tRNA(Phe) + L-phenylalanine + ATP = L-phenylalanyl-tRNA(Phe) + AMP + diphosphate + H(+). In Pectobacterium atrosepticum (strain SCRI 1043 / ATCC BAA-672) (Erwinia carotovora subsp. atroseptica), this protein is Phenylalanine--tRNA ligase alpha subunit.